The following is a 136-amino-acid chain: Large ribosomal subunit protein uL16c (136 aa).

Residues 1–20 (MLSPKRTRFRKQHRGRMKGK) form a disordered region.

It belongs to the universal ribosomal protein uL16 family. Part of the 50S ribosomal subunit.

The protein localises to the plastid. It is found in the chloroplast. This is Large ribosomal subunit protein uL16c from Lolium perenne (Perennial ryegrass).